The following is a 145-amino-acid chain: Dihydrolipoyllysine-residue succinyltransferase component of 2-oxoglutarate dehydrogenase complex, mitochondrial (145 aa).

The region spanning 4 to 31 (ITVQTPAFAESVTEGDVRVEGGTPLFTL) is the Lipoyl-binding domain. At Ser14 the chain carries Phosphoserine. 2 positions are modified to N6-acetyllysine: Lys36 and Lys66. Catalysis depends on residues His119 and Asp123.

It belongs to the 2-oxoacid dehydrogenase family. As to quaternary structure, the 2-oxoglutarate dehydrogenase complex is composed of OGDH (2-oxoglutarate dehydrogenase; E1), DLST (dihydrolipoamide succinyltransferase; E2), DLD (dihydrolipoamide dehydrogenase; E3) and the assembly factor KGD4. It contains multiple copies of the three enzymatic components (E1, E2 and E3). In the nucleus, the 2-oxoglutarate dehydrogenase complex associates with KAT2A. Interacts with ABHD11; this interaction maintains the functional lipoylation of the 2-oxoglutarate dehydrogenase complex. It depends on (R)-lipoate as a cofactor.

The protein resides in the mitochondrion matrix. The protein localises to the nucleus. It carries out the reaction N(6)-[(R)-dihydrolipoyl]-L-lysyl-[protein] + succinyl-CoA = N(6)-[(R)-S(8)-succinyldihydrolipoyl]-L-lysyl-[protein] + CoA. It participates in amino-acid degradation; L-lysine degradation via saccharopine pathway; glutaryl-CoA from L-lysine: step 6/6. It functions in the pathway carbohydrate metabolism; tricarboxylic acid cycle. Dihydrolipoamide succinyltransferase (E2) component of the 2-oxoglutarate dehydrogenase complex. The 2-oxoglutarate dehydrogenase complex catalyzes the overall conversion of 2-oxoglutarate to succinyl-CoA and CO(2). The 2-oxoglutarate dehydrogenase complex is mainly active in the mitochondrion. A fraction of the 2-oxoglutarate dehydrogenase complex also localizes in the nucleus and is required for lysine succinylation of histones: associates with KAT2A on chromatin and provides succinyl-CoA to histone succinyltransferase KAT2A. This is Dihydrolipoyllysine-residue succinyltransferase component of 2-oxoglutarate dehydrogenase complex, mitochondrial from Mesocricetus auratus (Golden hamster).